Here is a 345-residue protein sequence, read N- to C-terminus: Uroporphyrinogen decarboxylase (345 aa).

Substrate-binding positions include 27 to 31 (RQAGR), Phe46, Asp76, Tyr152, Ser207, and His320.

The protein belongs to the uroporphyrinogen decarboxylase family. In terms of assembly, homodimer.

It localises to the cytoplasm. The catalysed reaction is uroporphyrinogen III + 4 H(+) = coproporphyrinogen III + 4 CO2. It functions in the pathway porphyrin-containing compound metabolism; protoporphyrin-IX biosynthesis; coproporphyrinogen-III from 5-aminolevulinate: step 4/4. Its function is as follows. Catalyzes the decarboxylation of four acetate groups of uroporphyrinogen-III to yield coproporphyrinogen-III. The chain is Uroporphyrinogen decarboxylase from Oceanobacillus iheyensis (strain DSM 14371 / CIP 107618 / JCM 11309 / KCTC 3954 / HTE831).